The following is a 175-amino-acid chain: MDIAIHHPWIRRPFFPFHSPSRLFDQFFGEHLLESDLFSTATSLSPFYLRPPSFLRAPSWIDTGLSEMRMEKDRFSVNLDVKHFSPEELKVKVLGDVVEVHGKHEERQDEHGFISREFHRKYRIPADVDPLTITSSLSSDGVLTVNGPRKQASGPERTIPITREEKPAVTAAPKK.

Methionine 1 carries the N-acetylmethionine modification. A phosphoserine mark is found at serine 19, serine 45, and serine 59. The 109-residue stretch at arginine 56–glutamate 164 folds into the sHSP domain. Histidine 83 provides a ligand contact to Zn(2+). At lysine 92 the chain carries N6-acetyllysine. Zn(2+) is bound by residues histidine 104, glutamate 106, histidine 111, and histidine 119. Positions valine 145–lysine 175 are disordered. The residue at position 166 (lysine 166) is an N6-acetyllysine. Threonine 170 carries O-linked (GlcNAc) threonine glycosylation.

This sequence belongs to the small heat shock protein (HSP20) family. In terms of assembly, heteromer composed of three CRYAA and one CRYAB subunits. Aggregates with homologous proteins, including the small heat shock protein HSPB1, to form large heteromeric complexes. Inter-subunit bridging via zinc ions enhances stability, which is crucial as there is no protein turn over in the lens. Interacts with HSPBAP1 and TTN/titin. Interacts with TMEM109; in the cellular response to DNA damage. Interacts with DES; binds rapidly during early stages of DES filament assembly and a reduced binding seen in the later stages. Interacts with TMED10; the interaction mediates the translocation from the cytoplasm into the ERGIC (endoplasmic reticulum-Golgi intermediate compartment) and thereby secretion. Interacts with ATP6V1A and with MTOR, forming a ternary complex. As to expression, lens as well as other tissues.

It is found in the cytoplasm. Its subcellular location is the nucleus. The protein resides in the secreted. It localises to the lysosome. Functionally, may contribute to the transparency and refractive index of the lens. Has chaperone-like activity, preventing aggregation of various proteins under a wide range of stress conditions. In lens epithelial cells, stabilizes the ATP6V1A protein, preventing its degradation by the proteasome. In Mesocricetus auratus (Golden hamster), this protein is Alpha-crystallin B chain (CRYAB).